Here is a 114-residue protein sequence, read N- to C-terminus: rRNA-processing protein cgrA (114 aa).

Residues 1–11 (MSSAIPTSSVN) are compositionally biased toward polar residues. Residues 1–114 (MSSAIPTSSV…REKRNKLLHS (114 aa)) are disordered. Residues 39 to 93 (YEKRLEARKRQEAVKEHERELREEKEAERKAQIQKIKDRRAAKEEKERYEKMAEK) are compositionally biased toward basic and acidic residues. The stretch at 40 to 101 (EKRLEARKRQ…EKMHRKRVER (62 aa)) forms a coiled coil. The segment covering 94-114 (MHRKRVERLKRREKRNKLLHS) has biased composition (basic residues).

Belongs to the CGR1 family.

It localises to the nucleus. The protein resides in the nucleolus. In terms of biological role, involved in nucleolar integrity and required for processing of the pre-rRNA for the 60S ribosome subunit. In Aspergillus fumigatus (strain ATCC MYA-4609 / CBS 101355 / FGSC A1100 / Af293) (Neosartorya fumigata), this protein is rRNA-processing protein cgrA (cgrA).